The sequence spans 183 residues: Threonylcarbamoyl-AMP synthase (183 aa).

Positions 1-183 constitute a YrdC-like domain; the sequence is MELAQIVERL…IFSRQIFRRG (183 aa).

The protein belongs to the SUA5 family. TsaC subfamily.

Its subcellular location is the cytoplasm. The catalysed reaction is L-threonine + hydrogencarbonate + ATP = L-threonylcarbamoyladenylate + diphosphate + H2O. In terms of biological role, required for the formation of a threonylcarbamoyl group on adenosine at position 37 (t(6)A37) in tRNAs that read codons beginning with adenine. Catalyzes the conversion of L-threonine, HCO(3)(-)/CO(2) and ATP to give threonylcarbamoyl-AMP (TC-AMP) as the acyladenylate intermediate, with the release of diphosphate. In Mannheimia succiniciproducens (strain KCTC 0769BP / MBEL55E), this protein is Threonylcarbamoyl-AMP synthase.